The sequence spans 290 residues: Eukaryotic translation initiation factor 3 subunit F-2 (290 aa).

The MPN domain maps to 12-150 (VRLQPLVLFQ…TRLYCAVTMG (139 aa)).

This sequence belongs to the eIF-3 subunit F family. In terms of assembly, component of the eukaryotic translation initiation factor 3 (eIF-3) complex. The eIF-3 complex interacts with pix.

Its subcellular location is the cytoplasm. Functionally, component of the eukaryotic translation initiation factor 3 (eIF-3) complex, which is involved in protein synthesis of a specialized repertoire of mRNAs and, together with other initiation factors, stimulates binding of mRNA and methionyl-tRNAi to the 40S ribosome. The eIF-3 complex specifically targets and initiates translation of a subset of mRNAs involved in cell proliferation. The chain is Eukaryotic translation initiation factor 3 subunit F-2 from Drosophila mojavensis (Fruit fly).